Consider the following 259-residue polypeptide: Small ribosomal subunit protein mS23 (259 aa).

Belongs to the mitochondrion-specific ribosomal protein mS23 family. Component of the mitochondrial small ribosomal subunit.

The protein resides in the mitochondrion. The sequence is that of Small ribosomal subunit protein mS23 (RSM25) from Pyricularia oryzae (strain 70-15 / ATCC MYA-4617 / FGSC 8958) (Rice blast fungus).